The primary structure comprises 132 residues: Fatty acid-binding protein, intestinal (132 aa).

Position 2 is an N-acetylalanine (A2). Hexadecanoate is bound by residues W83 and R107. Residues W83 and R107 each coordinate tetradecanoate.

The protein belongs to the calycin superfamily. Fatty-acid binding protein (FABP) family. In terms of tissue distribution, expressed in the small intestine. Expression in the mucosal cells of the ileum extends from the midvillar region to the villus tips.

The protein localises to the cytoplasm. FABPs are thought to play a role in the intracellular transport of long-chain fatty acids and their acyl-CoA esters. FABP2 is probably involved in triglyceride-rich lipoprotein synthesis. Binds saturated long-chain fatty acids with a high affinity, but binds with a lower affinity to unsaturated long-chain fatty acids. FABP2 may also help maintain energy homeostasis by functioning as a lipid sensor. In Rattus norvegicus (Rat), this protein is Fatty acid-binding protein, intestinal (Fabp2).